The following is a 545-amino-acid chain: Chaperonin GroEL 1 (545 aa).

ATP-binding positions include 30 to 33 (TLGP), Lys-51, 87 to 91 (DGTTT), Gly-415, 479 to 481 (NAA), and Asp-495.

This sequence belongs to the chaperonin (HSP60) family. As to quaternary structure, forms a cylinder of 14 subunits composed of two heptameric rings stacked back-to-back. Interacts with the co-chaperonin GroES.

It localises to the cytoplasm. The enzyme catalyses ATP + H2O + a folded polypeptide = ADP + phosphate + an unfolded polypeptide.. Its function is as follows. Together with its co-chaperonin GroES, plays an essential role in assisting protein folding. The GroEL-GroES system forms a nano-cage that allows encapsulation of the non-native substrate proteins and provides a physical environment optimized to promote and accelerate protein folding. The sequence is that of Chaperonin GroEL 1 from Methylococcus capsulatus (strain ATCC 33009 / NCIMB 11132 / Bath).